Consider the following 433-residue polypeptide: Enolase (433 aa).

Gln167 serves as a coordination point for (2R)-2-phosphoglycerate. The active-site Proton donor is Glu209. Asp246 serves as a coordination point for Mg(2+). Residues 252–260 (FYDAEKKEY) carry the Plasminogen-binding motif motif. The Mg(2+) site is built by Glu291 and Asp318. (2R)-2-phosphoglycerate is bound by residues Lys343, Arg372, Ser373, and Lys394. Lys343 functions as the Proton acceptor in the catalytic mechanism.

This sequence belongs to the enolase family. In terms of assembly, component of the RNA degradosome, a multiprotein complex involved in RNA processing and mRNA degradation. Mg(2+) is required as a cofactor.

The protein resides in the cell inner membrane. The protein localises to the cell outer membrane. It is found in the cytoplasm. It localises to the secreted. Its subcellular location is the cell surface. It catalyses the reaction (2R)-2-phosphoglycerate = phosphoenolpyruvate + H2O. It functions in the pathway carbohydrate degradation; glycolysis; pyruvate from D-glyceraldehyde 3-phosphate: step 4/5. Its function is as follows. Catalyzes the reversible conversion of 2-phosphoglycerate (2-PG) into phosphoenolpyruvate (PEP). It is essential for the degradation of carbohydrates via glycolysis. Functionally, 'Moonlights' as a plasminogen receptor and plasmin activator. Binds host (human) plasminogen in vitro. Binds human plasmin and plasminogen on the cell surface; enhances the activity of host tissue-specific plasminogen activator (tPA). Plasmin bound to bacteria is partially protected from its physiological inhibitor alpha-2AP (SERPINF2). The sequence is that of Enolase from Aeromonas hydrophila.